The primary structure comprises 809 residues: DNA replication helicase (809 aa).

72–79 contacts ATP; that stretch reads GTAGAGKS.

It belongs to the herpesviridae helicase family. In terms of assembly, associates with the primase and the primase-associated factor to form the helicase-primase complex.

The protein resides in the host nucleus. In terms of biological role, component of the helicase/primase complex. Unwinds the DNA at the replication forks and generates single-stranded DNA for both leading and lagging strand synthesis. The primase synthesizes short RNA primers on the lagging strand that the polymerase elongates using dNTPs. Possesses helicase-like motifs and therefore may act as the helicase subunit of the complex. The protein is DNA replication helicase of Epstein-Barr virus (strain B95-8) (HHV-4).